Here is a 245-residue protein sequence, read N- to C-terminus: tRNA (guanine-N(1)-)-methyltransferase (245 aa).

S-adenosyl-L-methionine-binding positions include glycine 108 and 127-132; that span reads IGDYVL.

Belongs to the RNA methyltransferase TrmD family. As to quaternary structure, homodimer.

It is found in the cytoplasm. The catalysed reaction is guanosine(37) in tRNA + S-adenosyl-L-methionine = N(1)-methylguanosine(37) in tRNA + S-adenosyl-L-homocysteine + H(+). In terms of biological role, specifically methylates guanosine-37 in various tRNAs. The polypeptide is tRNA (guanine-N(1)-)-methyltransferase (Lactobacillus delbrueckii subsp. bulgaricus (strain ATCC 11842 / DSM 20081 / BCRC 10696 / JCM 1002 / NBRC 13953 / NCIMB 11778 / NCTC 12712 / WDCM 00102 / Lb 14)).